The chain runs to 108 residues: Protein YcgL (108 aa).

The region spanning 12-96 (MFCVIYRSSK…PPEDLLKQHL (85 aa)) is the YcgL domain.

The chain is Protein YcgL from Escherichia coli (strain K12 / MC4100 / BW2952).